A 518-amino-acid chain; its full sequence is MRSAAFSLPFCDWKCRRRLGAADKWPLLKRSFRILPPLIAGGATTEVKEVEKFADEEDFIKAGGSELFFVKMQERKPMEKQRKIADELTKISSGDPMLDLIVIGCGPAGMSLAAEAGKRGLSVGLIGPDLPFTNNYGVWEDEFKGLGLESCIEHVWQDTIAYLDSSDPILISRAYGRVSRHLLHAELLRRCQETGVGFLDSKVEKIIEASDGSSIVVCEGDLMLPCRLATVASGAASGKLLQYEVGGPRVSVQTAYGVEAEVGNNPYDPRSMVFMDYRDHVKGKIISDEEYPTFLYVMPISSTRVFYEETCLASRNAMPFDRLRSKLMSRLKAMGVSILKIYEEEWSYIPVGGSLPNTEQKNLAFGVAASMVHPATGYSIVRSLSEAPQYASVITNILKRNSNSSQNNVIGSSYNPSVLAWRTLWPQEGKRQRAFFLFGLALILQLDIDGIRIFFQTFFRLPDWMWQGFLGSTLSSAGLIWFAFYMFAIAPNSLRICLIKHLLSDPTGSTMIREYLTL.

NAD(+) is bound at residue 100–128 (LIVIGCGPAGMSLAAEAGKRGLSVGLIGP). Transmembrane regions (helical) follow at residues 435–455 (FFLF…RIFF) and 469–489 (FLGS…MFAI).

It belongs to the lycopene cyclase family. As to expression, expressed in leaves and roots. Detected in flower buds and lips.

The protein localises to the plastid. It is found in the chloroplast membrane. It carries out the reaction a carotenoid psi-end group = a carotenoid epsilon-end group. It participates in carotenoid biosynthesis; alpha-zeacarotene biosynthesis. It functions in the pathway carotenoid biosynthesis; delta-carotene biosynthesis. In terms of biological role, catalyzes the single epsilon-cyclization reaction which converts lycopene to delta-carotene and neurosporene to alpha-zeacarotene. Required for lutein biosynthesis. This is Lycopene epsilon cyclase, chloroplastic from Oncidium hybrid cultivar (Orchid).